The chain runs to 347 residues: Selenide, water dikinase (347 aa).

Cys16 is a catalytic residue. ATP is bound by residues Lys19 and 47–49 (TRD). Asp50 is a Mg(2+) binding site. ATP-binding positions include Asp67, Asp90, and 138-140 (GHS). A Mg(2+)-binding site is contributed by Asp90. Asp226 serves as a coordination point for Mg(2+).

The protein belongs to the selenophosphate synthase 1 family. Class I subfamily. Homodimer. Mg(2+) serves as cofactor.

It catalyses the reaction hydrogenselenide + ATP + H2O = selenophosphate + AMP + phosphate + 2 H(+). Functionally, synthesizes selenophosphate from selenide and ATP. The chain is Selenide, water dikinase from Photorhabdus laumondii subsp. laumondii (strain DSM 15139 / CIP 105565 / TT01) (Photorhabdus luminescens subsp. laumondii).